The chain runs to 133 residues: Ribosome-binding factor A (133 aa).

Belongs to the RbfA family. Monomer. Binds 30S ribosomal subunits, but not 50S ribosomal subunits or 70S ribosomes.

The protein resides in the cytoplasm. One of several proteins that assist in the late maturation steps of the functional core of the 30S ribosomal subunit. Associates with free 30S ribosomal subunits (but not with 30S subunits that are part of 70S ribosomes or polysomes). Required for efficient processing of 16S rRNA. May interact with the 5'-terminal helix region of 16S rRNA. The sequence is that of Ribosome-binding factor A from Bordetella bronchiseptica (strain ATCC BAA-588 / NCTC 13252 / RB50) (Alcaligenes bronchisepticus).